We begin with the raw amino-acid sequence, 555 residues long: Pentatricopeptide repeat-containing protein At2g44880 (555 aa).

PPR repeat units follow at residues 41–75 (DSFL…TCFA), 77–111 (DNFT…GFCA), 112–142 (DMYV…MPHR), 143–173 (SEVS…MPHV), 175–205 (DVVI…MTHK), 206–240 (TVIT…NLVS), 241–267 (WNTM…MQAT), 273–307 (DDVT…KLDK), 308–342 (KVKV…QVAS), 343–370 (WNAM…MIEE), 373–407 (DEIT…GLNA), and 408–438 (KIEH…MPFE). The interval 443-518 (ILSSFLSACG…EVGCSLIEIN (76 aa)) is type E motif. The interval 519-549 (YIVSEFISGDTTHPHRRSIHLVLGDLLMHMN) is type E(+) motif.

The protein belongs to the PPR family. PCMP-E subfamily.

This Arabidopsis thaliana (Mouse-ear cress) protein is Pentatricopeptide repeat-containing protein At2g44880 (PCMP-E9).